The sequence spans 400 residues: Phosphoglycerate kinase (400 aa).

Substrate is bound by residues 23–25 (DLN), R38, 61–64 (HFGR), R120, and R153. ATP contacts are provided by residues K203, E325, and 355-358 (GGDT).

It belongs to the phosphoglycerate kinase family. As to quaternary structure, monomer.

The protein resides in the cytoplasm. The catalysed reaction is (2R)-3-phosphoglycerate + ATP = (2R)-3-phospho-glyceroyl phosphate + ADP. The protein operates within carbohydrate degradation; glycolysis; pyruvate from D-glyceraldehyde 3-phosphate: step 2/5. This is Phosphoglycerate kinase from Methylorubrum extorquens (strain PA1) (Methylobacterium extorquens).